The chain runs to 97 residues: Co-chaperonin GroES (97 aa).

The protein belongs to the GroES chaperonin family. As to quaternary structure, heptamer of 7 subunits arranged in a ring. Interacts with the chaperonin GroEL.

It localises to the cytoplasm. Its function is as follows. Together with the chaperonin GroEL, plays an essential role in assisting protein folding. The GroEL-GroES system forms a nano-cage that allows encapsulation of the non-native substrate proteins and provides a physical environment optimized to promote and accelerate protein folding. GroES binds to the apical surface of the GroEL ring, thereby capping the opening of the GroEL channel. The sequence is that of Co-chaperonin GroES from Aeromonas salmonicida.